The following is a 165-amino-acid chain: Putative pre-16S rRNA nuclease (165 aa).

It belongs to the YqgF nuclease family.

It is found in the cytoplasm. In terms of biological role, could be a nuclease involved in processing of the 5'-end of pre-16S rRNA. The polypeptide is Putative pre-16S rRNA nuclease (Rhizobium meliloti (strain 1021) (Ensifer meliloti)).